Here is a 101-residue protein sequence, read N- to C-terminus: NAD(P)H-quinone oxidoreductase subunit 4L, chloroplastic (101 aa).

The next 3 membrane-spanning stretches (helical) occupy residues 2–22 (MLEY…YGLI), 32–52 (MCLE…SYFF), and 61–81 (IFSI…LAIV).

This sequence belongs to the complex I subunit 4L family. In terms of assembly, NDH is composed of at least 16 different subunits, 5 of which are encoded in the nucleus.

It is found in the plastid. It localises to the chloroplast thylakoid membrane. The enzyme catalyses a plastoquinone + NADH + (n+1) H(+)(in) = a plastoquinol + NAD(+) + n H(+)(out). It catalyses the reaction a plastoquinone + NADPH + (n+1) H(+)(in) = a plastoquinol + NADP(+) + n H(+)(out). In terms of biological role, NDH shuttles electrons from NAD(P)H:plastoquinone, via FMN and iron-sulfur (Fe-S) centers, to quinones in the photosynthetic chain and possibly in a chloroplast respiratory chain. The immediate electron acceptor for the enzyme in this species is believed to be plastoquinone. Couples the redox reaction to proton translocation, and thus conserves the redox energy in a proton gradient. This chain is NAD(P)H-quinone oxidoreductase subunit 4L, chloroplastic, found in Ipomoea purpurea (Common morning glory).